The sequence spans 509 residues: Maturase K (509 aa).

Belongs to the intron maturase 2 family. MatK subfamily.

Its subcellular location is the plastid. The protein resides in the chloroplast. Functionally, usually encoded in the trnK tRNA gene intron. Probably assists in splicing its own and other chloroplast group II introns. The polypeptide is Maturase K (Clematis vitalba (Evergreen clematis)).